The sequence spans 990 residues: Type III restriction-modification enzyme StyLTI Res subunit (990 aa).

The segment at 50-545 (NIDVKMETGT…GLRLPVDENG (496 aa)) is helicase-like domain. A VRR-NUC domain is found at 884–970 (LLKYDYPQQV…RQNINVEFAE (87 aa)). The tract at residues 913-937 (STTPDFVYRIERQDADSVYLLVETK) is endonuclease domain.

Belongs to the type III restriction-modification system Res protein family. In terms of assembly, contains two different subunits: Res and Mod. It depends on Mg(2+) as a cofactor. S-adenosyl-L-methionine serves as cofactor.

The enzyme catalyses Endonucleolytic cleavage of DNA to give specific double-stranded fragments with terminal 5'-phosphates.. Its function is as follows. A type III restriction enzyme that recognizes 2 inversely oriented double-stranded sequences 5'-CAGAG-3' and cleaves DNA 25-27 base pairs downstream. After binding to one recognition site undergoes random one-dimensional diffusion along DNA until it collides with a stationary enzyme bound to the second DNA site, which is when DNA cleavage occurs. DNA restriction requires both the Res and Mod subunits. The sequence is that of Type III restriction-modification enzyme StyLTI Res subunit from Salmonella typhimurium (strain LT2 / SGSC1412 / ATCC 700720).